Consider the following 156-residue polypeptide: Small ribosomal subunit protein uS7 (156 aa).

Belongs to the universal ribosomal protein uS7 family. As to quaternary structure, part of the 30S ribosomal subunit. Contacts proteins S9 and S11.

Its function is as follows. One of the primary rRNA binding proteins, it binds directly to 16S rRNA where it nucleates assembly of the head domain of the 30S subunit. Is located at the subunit interface close to the decoding center, probably blocks exit of the E-site tRNA. The protein is Small ribosomal subunit protein uS7 of Clostridioides difficile (strain 630) (Peptoclostridium difficile).